A 410-amino-acid polypeptide reads, in one-letter code: Transcription factor SPN1 (410 aa).

Residues 1 to 132 (MSTADQEQPK…SRQELEEKLD (132 aa)) form a disordered region. At T15 the chain carries Phosphothreonine. Residues 20 to 52 (TASSQKSTINAENENTKQNQSMEPQETSKGTSN) show a composition bias toward polar residues. S23 bears the Phosphoserine; by ATM or ATR mark. The residue at position 40 (S40) is a Phosphoserine. Basic and acidic residues predominate over residues 53-65 (DTKDPDNGEKNEE). The residue at position 85 (S85) is a Phosphoserine. The residue at position 86 (T86) is a Phosphothreonine. A Phosphoserine modification is found at S89. Residues 219-296 (QSVRIWLEPL…AEWTRPIIGA (78 aa)) enclose the TFIIS N-terminal domain. Residues 318 to 346 (KSVMDSAKNRKKKSKSGEDPTSRGSSVQT) are disordered.

This sequence belongs to the IWS1 family. As to quaternary structure, interacts with ABD1, RBP1, SPT5 and SPT6.

It localises to the nucleus. Its function is as follows. Transcription factor involved in RNA polymerase II transcription regulation. May function in both SPT15/TBP post-recruitment and recruitment steps of transcription. The polypeptide is Transcription factor SPN1 (SPN1) (Saccharomyces cerevisiae (strain ATCC 204508 / S288c) (Baker's yeast)).